A 73-amino-acid chain; its full sequence is MKPINIQDQFLNQIRKDNTFVTVFLLNGFQLRGQVKGFDNFTVLLETEGKQQLIYKHAISTFAPQKNVNLELE.

The Sm domain occupies 8-68 (DQFLNQIRKD…ISTFAPQKNV (61 aa)).

It belongs to the Hfq family. As to quaternary structure, homohexamer.

Its function is as follows. RNA chaperone that binds small regulatory RNA (sRNAs) and mRNAs to facilitate mRNA translational regulation in response to envelope stress, environmental stress and changes in metabolite concentrations. Also binds with high specificity to tRNAs. The protein is RNA-binding protein Hfq of Bacillus pumilus (strain SAFR-032).